The sequence spans 89 residues: DNA-binding protein HU (89 aa).

This sequence belongs to the bacterial histone-like protein family. As to quaternary structure, homodimer. The dimer interacts with the DNA mimic protein DMP12. It also interacts with the monomeric form of the DNA mimic protein DMP19 with 1:1 stoichiometry.

Its activity is regulated as follows. Activity is regulated by the DNA mimic protein DMP12. Activity is inhibited in the presence of the DNA mimic protein DMP19, which interacts with HU and prevents the binding of HU to DNA. In terms of biological role, histone-like DNA-binding protein which is capable of wrapping DNA to stabilize it, and thus to prevent its denaturation under extreme environmental conditions. The chain is DNA-binding protein HU from Neisseria meningitidis serogroup B (strain ATCC BAA-335 / MC58).